We begin with the raw amino-acid sequence, 270 residues long: B3 domain-containing protein Os03g0212300 (270 aa).

2 consecutive DNA-binding regions (TF-B3) follow at residues 13–110 (FEFF…FDET) and 158–265 (VTLR…RKAD).

The protein localises to the nucleus. This is B3 domain-containing protein Os03g0212300 from Oryza sativa subsp. japonica (Rice).